A 357-amino-acid polypeptide reads, in one-letter code: Chorismate synthase (357 aa).

NADP(+) contacts are provided by Arg48 and Arg54. FMN contacts are provided by residues 125–127 (RSS), 238–239 (NA), Gly278, 293–297 (KPTSS), and Arg319.

It belongs to the chorismate synthase family. Homotetramer. FMNH2 serves as cofactor.

The catalysed reaction is 5-O-(1-carboxyvinyl)-3-phosphoshikimate = chorismate + phosphate. It participates in metabolic intermediate biosynthesis; chorismate biosynthesis; chorismate from D-erythrose 4-phosphate and phosphoenolpyruvate: step 7/7. Its function is as follows. Catalyzes the anti-1,4-elimination of the C-3 phosphate and the C-6 proR hydrogen from 5-enolpyruvylshikimate-3-phosphate (EPSP) to yield chorismate, which is the branch point compound that serves as the starting substrate for the three terminal pathways of aromatic amino acid biosynthesis. This reaction introduces a second double bond into the aromatic ring system. This Blochmanniella floridana protein is Chorismate synthase.